The sequence spans 167 residues: Protein-export protein SecB (167 aa).

The segment at 1 to 20 (MASNDDAPVGAANGNGNTGA) is disordered.

This sequence belongs to the SecB family. Homotetramer, a dimer of dimers. One homotetramer interacts with 1 SecA dimer.

It localises to the cytoplasm. Functionally, one of the proteins required for the normal export of preproteins out of the cell cytoplasm. It is a molecular chaperone that binds to a subset of precursor proteins, maintaining them in a translocation-competent state. It also specifically binds to its receptor SecA. This is Protein-export protein SecB from Mesorhizobium japonicum (strain LMG 29417 / CECT 9101 / MAFF 303099) (Mesorhizobium loti (strain MAFF 303099)).